A 538-amino-acid polypeptide reads, in one-letter code: NAD(P)H-quinone oxidoreductase chain 4 1 (538 aa).

Helical transmembrane passes span 7 to 27, 37 to 57, 88 to 108, 116 to 136, 137 to 157, 170 to 190, 210 to 230, 244 to 264, 278 to 298, 315 to 335, 336 to 356, 388 to 408, and 418 to 438; these read FPWL…IPII, WYGL…FWHY, LSMP…FAAW, LFYG…VAQD, LLLF…LISI, FILY…ALAF, AIEL…LPIF, SAPG…YALI, FAPV…CCAF, MGFV…GAVL, QMVS…VTYE, LALP…GIAT, and VVVV…LLSM.

Belongs to the complex I subunit 4 family.

Its subcellular location is the cellular thylakoid membrane. The catalysed reaction is a plastoquinone + NADH + (n+1) H(+)(in) = a plastoquinol + NAD(+) + n H(+)(out). It catalyses the reaction a plastoquinone + NADPH + (n+1) H(+)(in) = a plastoquinol + NADP(+) + n H(+)(out). NDH-1 shuttles electrons from NAD(P)H, via FMN and iron-sulfur (Fe-S) centers, to quinones in the respiratory chain. The immediate electron acceptor for the enzyme in this species is believed to be plastoquinone. Couples the redox reaction to proton translocation (for every two electrons transferred, four hydrogen ions are translocated across the cytoplasmic membrane), and thus conserves the redox energy in a proton gradient. This chain is NAD(P)H-quinone oxidoreductase chain 4 1, found in Nostoc sp. (strain PCC 7120 / SAG 25.82 / UTEX 2576).